The chain runs to 365 residues: Histidinol-phosphate aminotransferase (365 aa).

The tract at residues 1–23 is disordered; the sequence is MSRPVPNPGILDIAPYTPGKSPV. K221 is modified (N6-(pyridoxal phosphate)lysine).

It belongs to the class-II pyridoxal-phosphate-dependent aminotransferase family. Histidinol-phosphate aminotransferase subfamily. As to quaternary structure, homodimer. It depends on pyridoxal 5'-phosphate as a cofactor.

It catalyses the reaction L-histidinol phosphate + 2-oxoglutarate = 3-(imidazol-4-yl)-2-oxopropyl phosphate + L-glutamate. Its pathway is amino-acid biosynthesis; L-histidine biosynthesis; L-histidine from 5-phospho-alpha-D-ribose 1-diphosphate: step 7/9. This is Histidinol-phosphate aminotransferase from Rhodopseudomonas palustris (strain BisB18).